A 324-amino-acid chain; its full sequence is Polyketide biosynthesis acyltransferase homolog PksD (324 aa).

Ser99 is an active-site residue.

Its subcellular location is the cytoplasm. Its pathway is antibiotic biosynthesis; bacillaene biosynthesis. Functionally, probably involved in some intermediate steps for the synthesis of the antibiotic polyketide bacillaene which is involved in secondary metabolism. This is Polyketide biosynthesis acyltransferase homolog PksD (pksD) from Bacillus subtilis (strain 168).